The primary structure comprises 463 residues: ATP synthase subunit beta (463 aa).

152–159 lines the ATP pocket; that stretch reads GGAGVGKT.

This sequence belongs to the ATPase alpha/beta chains family. In terms of assembly, F-type ATPases have 2 components, CF(1) - the catalytic core - and CF(0) - the membrane proton channel. CF(1) has five subunits: alpha(3), beta(3), gamma(1), delta(1), epsilon(1). CF(0) has three main subunits: a(1), b(2) and c(9-12). The alpha and beta chains form an alternating ring which encloses part of the gamma chain. CF(1) is attached to CF(0) by a central stalk formed by the gamma and epsilon chains, while a peripheral stalk is formed by the delta and b chains.

It localises to the cell inner membrane. The enzyme catalyses ATP + H2O + 4 H(+)(in) = ADP + phosphate + 5 H(+)(out). Its function is as follows. Produces ATP from ADP in the presence of a proton gradient across the membrane. The catalytic sites are hosted primarily by the beta subunits. The chain is ATP synthase subunit beta from Shewanella oneidensis (strain ATCC 700550 / JCM 31522 / CIP 106686 / LMG 19005 / NCIMB 14063 / MR-1).